We begin with the raw amino-acid sequence, 124 residues long: Ribonuclease pancreatic (124 aa).

The interval 1-24 is disordered; that stretch reads KESSAMKFQRQHMDSSGSPSTNAN. Substrate-binding residues include Lys-7 and Arg-10. The active-site Proton acceptor is His-12. A compositionally biased stretch (polar residues) spans 14–24; that stretch reads DSSGSPSTNAN. 4 disulfides stabilise this stretch: Cys-26–Cys-84, Cys-40–Cys-95, Cys-58–Cys-110, and Cys-65–Cys-72. Residue Asn-34 is glycosylated (N-linked (GlcNAc...) asparagine). Substrate is bound by residues 41 to 45, Lys-66, and Arg-85; that span reads KPVNT. His-119 functions as the Proton donor in the catalytic mechanism.

The protein belongs to the pancreatic ribonuclease family. Monomer. Interacts with and forms tight 1:1 complexes with RNH1. Dimerization of two such complexes may occur. Interaction with RNH1 inhibits this protein. As to expression, pancreas.

Its subcellular location is the secreted. The catalysed reaction is an [RNA] containing cytidine + H2O = an [RNA]-3'-cytidine-3'-phosphate + a 5'-hydroxy-ribonucleotide-3'-[RNA].. The enzyme catalyses an [RNA] containing uridine + H2O = an [RNA]-3'-uridine-3'-phosphate + a 5'-hydroxy-ribonucleotide-3'-[RNA].. Endonuclease that catalyzes the cleavage of RNA on the 3' side of pyrimidine nucleotides. Acts on single-stranded and double-stranded RNA. This chain is Ribonuclease pancreatic (RNASE1), found in Chinchilla chinchilla (Short-tailed chinchilla).